Reading from the N-terminus, the 487-residue chain is uncharacterized protein (487 aa).

A run of 3 helical transmembrane segments spans residues 10 to 30 (AALM…AADA), 45 to 65 (VISP…AVAA), and 439 to 459 (APVV…DFTL).

Its subcellular location is the cell membrane. This is an uncharacterized protein from Mycobacterium tuberculosis (strain CDC 1551 / Oshkosh).